Here is a 335-residue protein sequence, read N- to C-terminus: MQRPLTEAEAADAMRVIMRGEATAAQIAAFALAVTVRGASADNLAGMARAAQEFATPVPRAGGDLLDTCGTGGDGLNTFNISTAAAIVAAACGVRVAKHGNRSASSACGSADVLEELGVRIDLGAEEAAACLDRTGITFLFAPVFHPAFRHTAGPRRELGARTVFNLLGPLCNPSGARLRTLGVPSRELVEPMTEVLERLGVTRALVFHSADGMDELSTAAPAHLVELRDGRRTTHRFDPAEHGLARSRPGDLAGGDRAVNAAVLRRVLAGGRGPARDVVLLNAAAALRVAGVAGTWSDGLRLAASAVDGGAAAGLLDRWAHASWQRADLVEVPA.

5-phospho-alpha-D-ribose 1-diphosphate is bound by residues Gly-70, 73–74 (GD), Thr-78, 80–83 (NIST), 98–106 (KHGNRSASS), and Ser-110. Gly-70 contributes to the anthranilate binding site. Mg(2+) is bound at residue Ser-82. Asn-101 contributes to the anthranilate binding site. Arg-156 lines the anthranilate pocket. Positions 215 and 216 each coordinate Mg(2+).

This sequence belongs to the anthranilate phosphoribosyltransferase family. Homodimer. Mg(2+) serves as cofactor.

The catalysed reaction is N-(5-phospho-beta-D-ribosyl)anthranilate + diphosphate = 5-phospho-alpha-D-ribose 1-diphosphate + anthranilate. Its pathway is amino-acid biosynthesis; L-tryptophan biosynthesis; L-tryptophan from chorismate: step 2/5. In terms of biological role, catalyzes the transfer of the phosphoribosyl group of 5-phosphorylribose-1-pyrophosphate (PRPP) to anthranilate to yield N-(5'-phosphoribosyl)-anthranilate (PRA). The chain is Anthranilate phosphoribosyltransferase 2 from Streptomyces coelicolor (strain ATCC BAA-471 / A3(2) / M145).